The primary structure comprises 58 residues: Conotoxin Im5.4 (58 aa).

Positions 1–18 (MRCLPVVVFLLLLLSAAA) are cleaved as a signal peptide. A propeptide spanning residues 19–28 (APGVGSKTER) is cleaved from the precursor.

The protein belongs to the conotoxin T superfamily. In terms of processing, contains 2 disulfide bonds that can be either 'C1-C3, C2-C4' or 'C1-C4, C2-C3', since these disulfide connectivities have been observed for conotoxins with cysteine framework V (for examples, see AC P0DQQ7 and AC P81755). As to expression, expressed by the venom duct.

Its subcellular location is the secreted. Its function is as follows. Probable neurotoxin. In Conus imperialis (Imperial cone), this protein is Conotoxin Im5.4.